Reading from the N-terminus, the 1192-residue chain is DNA topoisomerase 2 (1192 aa).

Residues N64, N95, and 142–149 each bind ATP; that span reads GTNGVGLK. 3 residues coordinate Mg(2+): E438, D539, and D541. Positions 707-1174 constitute a Topo IIA-type catalytic domain; the sequence is IPNFLDGMTR…PGASVWLEEI (468 aa). The O-(5'-phospho-DNA)-tyrosine intermediate role is filled by Y800.

This sequence belongs to the type II topoisomerase family. The cofactor is Mg(2+). Mn(2+) is required as a cofactor. It depends on Ca(2+) as a cofactor.

It is found in the host cytoplasm. The enzyme catalyses ATP-dependent breakage, passage and rejoining of double-stranded DNA.. In terms of biological role, type II topoisomerase. Processively relaxes supercoiled DNA. Displays DNA-supercoiling activity only when associated with the viral histone-like protein. The polypeptide is DNA topoisomerase 2 (African swine fever virus (isolate Pig/Kenya/KEN-50/1950) (ASFV)).